The following is a 379-amino-acid chain: Neutral protease 2 homolog TRV_03208 (379 aa).

A signal peptide spans 1-19 (MKFFTALAAVGALLAPALA). The propeptide occupies 20–187 (LPTPASEEAS…DYFSKSLDKR (168 aa)). Disulfide bonds link Cys-193/Cys-263 and Cys-270/Cys-288. An N-linked (GlcNAc...) asparagine glycan is attached at Asn-221. His-312 is a Zn(2+) binding site. The active site involves Glu-313. His-316 and Asp-327 together coordinate Zn(2+).

Belongs to the peptidase M35 family. Zn(2+) serves as cofactor.

The protein resides in the secreted. The catalysed reaction is Preferential cleavage of bonds with hydrophobic residues in P1'. Also 3-Asn-|-Gln-4 and 8-Gly-|-Ser-9 bonds in insulin B chain.. Functionally, secreted metalloproteinase that allows assimilation of proteinaceous substrates. Shows high activities on basic nuclear substrates such as histone and protamine. May be involved in virulence. The sequence is that of Neutral protease 2 homolog TRV_03208 from Trichophyton verrucosum (strain HKI 0517).